The primary structure comprises 149 residues: Large ribosomal subunit protein uL22c (149 aa).

This sequence belongs to the universal ribosomal protein uL22 family. Part of the 50S ribosomal subunit.

The protein localises to the plastid. It localises to the chloroplast. Functionally, this protein binds specifically to 23S rRNA. The globular domain of the protein is located near the polypeptide exit tunnel on the outside of the subunit, while an extended beta-hairpin is found that lines the wall of the exit tunnel in the center of the 70S ribosome. This is Large ribosomal subunit protein uL22c (rpl22) from Brachypodium distachyon (Purple false brome).